Reading from the N-terminus, the 280-residue chain is F420-dependent methylenetetrahydromethanopterin dehydrogenase (280 aa).

Belongs to the MTD family.

The enzyme catalyses 5,10-methylenetetrahydromethanopterin + oxidized coenzyme F420-(gamma-L-Glu)(n) + 2 H(+) = 5,10-methenyl-5,6,7,8-tetrahydromethanopterin + reduced coenzyme F420-(gamma-L-Glu)(n). Its pathway is one-carbon metabolism; methanogenesis from CO(2); 5,10-methylene-5,6,7,8-tetrahydromethanopterin from 5,10-methenyl-5,6,7,8-tetrahydromethanopterin (coenzyme F420 route): step 1/1. In terms of biological role, catalyzes the reversible reduction of methenyl-H(4)MPT(+) to methylene-H(4)MPT. The protein is F420-dependent methylenetetrahydromethanopterin dehydrogenase of Methanoculleus marisnigri (strain ATCC 35101 / DSM 1498 / JR1).